Here is a 245-residue protein sequence, read N- to C-terminus: tRNA (guanine-N(1)-)-methyltransferase (245 aa).

S-adenosyl-L-methionine is bound by residues G108 and 127–132 (IGDYVL).

The protein belongs to the RNA methyltransferase TrmD family. Homodimer.

The protein resides in the cytoplasm. It carries out the reaction guanosine(37) in tRNA + S-adenosyl-L-methionine = N(1)-methylguanosine(37) in tRNA + S-adenosyl-L-homocysteine + H(+). Its function is as follows. Specifically methylates guanosine-37 in various tRNAs. The protein is tRNA (guanine-N(1)-)-methyltransferase of Lactobacillus delbrueckii subsp. bulgaricus (strain ATCC 11842 / DSM 20081 / BCRC 10696 / JCM 1002 / NBRC 13953 / NCIMB 11778 / NCTC 12712 / WDCM 00102 / Lb 14).